A 414-amino-acid chain; its full sequence is Lysosome-associated membrane glycoprotein 1 (414 aa).

Positions 1–18 (MGGAARAVLLGFLQASSS) are cleaved as a signal peptide. Residues 19-181 (FDVRDSTGKV…SANKTECRED (163 aa)) are first lumenal domain. Residues 19 to 379 (FDVRDSTGKV…EECQLDENNM (361 aa)) lie on the Lumenal side of the membrane. Cys29 and Cys67 are joined by a disulfide. N-linked (GlcNAc...) asparagine glycosylation is found at Asn33, Asn58, Asn71, Asn90, Asn108, Asn117, Asn154, Asn159, Asn168, and Asn174. Cys142 and Cys178 are joined by a disulfide. A hinge region spans residues 182–224 (MVSTTTVAPTTPKHATSQVPTTSPAPTAAPSSPAVGKYNVTGA). The disordered stretch occupies residues 186-213 (TTVAPTTPKHATSQVPTTSPAPTAAPSS). The span at 196–213 (ATSQVPTTSPAPTAAPSS) shows a compositional bias: low complexity. N-linked (GlcNAc...) asparagine glycans are attached at residues Asn220, Asn225, Asn238, Asn259, Asn289, Asn301, and Asn319. The segment at 225–379 (NGTCVLASMG…EECQLDENNM (155 aa)) is second lumenal domain. Residues Cys228 and Cys266 are joined by a disulfide bond. Cys335 and Cys372 are joined by a disulfide. Residues 380–403 (LIPIIVGAALAGLVLIVLIAYLIG) traverse the membrane as a helical segment. At 404-414 (RKRSHAGYQTI) the chain is on the cytoplasmic side.

It belongs to the LAMP family.

It localises to the lysosome membrane. The protein localises to the endosome membrane. The protein resides in the late endosome membrane. It is found in the cell membrane. Its subcellular location is the cytolytic granule membrane. In terms of biological role, lysosomal membrane glycoprotein which plays an important role in lysosome biogenesis, lysosomal pH regulation, autophagy and cholesterol homeostasis. (Microbial infection) Plays an essential role in efficient replication and spread of Marek's disease virus, by facilitating viral cell-to-cell spread. This chain is Lysosome-associated membrane glycoprotein 1 (LAMP1), found in Gallus gallus (Chicken).